The primary structure comprises 398 residues: Mannitol-1-phosphate 5-dehydrogenase (398 aa).

10 to 21 (AVHFGAGNIGRG) serves as a coordination point for NAD(+). Residue lysine 221 is part of the active site.

Belongs to the mannitol dehydrogenase family. Monomer.

It carries out the reaction D-mannitol 1-phosphate + NAD(+) = beta-D-fructose 6-phosphate + NADH + H(+). In terms of biological role, catalyzes the NAD(H)-dependent interconversion of D-fructose 6-phosphate and D-mannitol 1-phosphate in the mannitol metabolic pathway. This Chaetomium globosum (strain ATCC 6205 / CBS 148.51 / DSM 1962 / NBRC 6347 / NRRL 1970) (Soil fungus) protein is Mannitol-1-phosphate 5-dehydrogenase.